Reading from the N-terminus, the 409-residue chain is Peptidase T (409 aa).

H78 provides a ligand contact to Zn(2+). D80 is a catalytic residue. D140 provides a ligand contact to Zn(2+). The Proton acceptor role is filled by E173. Positions 174, 196, and 379 each coordinate Zn(2+).

Belongs to the peptidase M20B family. Zn(2+) is required as a cofactor.

The protein resides in the cytoplasm. It catalyses the reaction Release of the N-terminal residue from a tripeptide.. In terms of biological role, cleaves the N-terminal amino acid of tripeptides. This Escherichia coli (strain SE11) protein is Peptidase T.